A 662-amino-acid polypeptide reads, in one-letter code: Probable protein phosphatase CG10417 (662 aa).

One can recognise a PPM-type phosphatase domain in the interval 23–564 (AVGASSMQGW…DNMTAVIVQF (542 aa)). Asp57 and Gly58 together coordinate Mn(2+). 2 disordered regions span residues 219 to 275 (DGVA…FKHT) and 288 to 374 (GSND…DEDQ). Composition is skewed to polar residues over residues 238 to 252 (DSNTTTSINDLSTKN), 261 to 275 (NDQNEGSNGTDFKHT), and 288 to 319 (GSNDMTELNQSSKNEFTNSSTSKEFERNINSS). Ser289 and Ser306 each carry phosphoserine. Over residues 320–334 (QDDEFTDDDADYEEN) the composition is skewed to acidic residues. Over residues 337–347 (VKSPDTSSAES) the composition is skewed to polar residues. Over residues 349 to 374 (DCTENDDDGDEDGNEDSDEEETDEDQ) the composition is skewed to acidic residues. Mn(2+) is bound by residues Asp506 and Asp555. Residues 591 to 609 (VSHSLNDQSASKRCASQNA) are compositionally biased toward polar residues. The disordered stretch occupies residues 591 to 662 (VSHSLNDQSA…KEVTIIVSSS (72 aa)). A phosphoserine mark is found at Ser592, Ser594, and Ser599. Residues 616-637 (LEKNNSKRLKTDLEQENIKDRT) are compositionally biased toward basic and acidic residues. Thr637 bears the Phosphothreonine mark. Phosphoserine occurs at positions 639 and 641.

It belongs to the PP2C family. Requires Mg(2+) as cofactor. Mn(2+) is required as a cofactor.

It carries out the reaction O-phospho-L-seryl-[protein] + H2O = L-seryl-[protein] + phosphate. The catalysed reaction is O-phospho-L-threonyl-[protein] + H2O = L-threonyl-[protein] + phosphate. The protein is Probable protein phosphatase CG10417 of Drosophila melanogaster (Fruit fly).